Here is a 235-residue protein sequence, read N- to C-terminus: MTQTPTNPRERLIVALDVPDVAQASKLVATLDDSVLFYKIGYQLAYAGGLSMAQDLIGAGKKVFIDLKLHDIGNTVASGVASIAKLGATFLTVHAYPQTMKAAVEASRGTGLKILAVTVLTSYDEADLKEAGYSLGVADLVAQRARQAQAIGIDGLVCSAEEAANLRAIVGEGLSLVTPGIRPAGSAVGDQKRVMTPARAIAAGADYLVVGRPIVAATDPKSAANAIVAEIAVAH.

Residues Asp-17, Lys-39, 66–75, Thr-121, Arg-182, Gln-191, Gly-211, and Arg-212 each bind substrate; that span reads DLKLHDIGNT. Catalysis depends on Lys-68, which acts as the Proton donor.

This sequence belongs to the OMP decarboxylase family. Type 1 subfamily. Homodimer.

The catalysed reaction is orotidine 5'-phosphate + H(+) = UMP + CO2. It functions in the pathway pyrimidine metabolism; UMP biosynthesis via de novo pathway; UMP from orotate: step 2/2. Catalyzes the decarboxylation of orotidine 5'-monophosphate (OMP) to uridine 5'-monophosphate (UMP). In Afipia carboxidovorans (strain ATCC 49405 / DSM 1227 / KCTC 32145 / OM5) (Oligotropha carboxidovorans), this protein is Orotidine 5'-phosphate decarboxylase.